The chain runs to 274 residues: Diaminopimelate epimerase (274 aa).

Asn-11, Gln-44, and Asn-64 together coordinate substrate. Catalysis depends on Cys-73, which acts as the Proton donor. Substrate contacts are provided by residues 74-75, Asn-157, Asn-190, and 208-209; these read GN and ER. The Proton acceptor role is filled by Cys-217. Residue 218-219 participates in substrate binding; it reads GS.

The protein belongs to the diaminopimelate epimerase family. In terms of assembly, homodimer.

It localises to the cytoplasm. The enzyme catalyses (2S,6S)-2,6-diaminopimelate = meso-2,6-diaminopimelate. Its pathway is amino-acid biosynthesis; L-lysine biosynthesis via DAP pathway; DL-2,6-diaminopimelate from LL-2,6-diaminopimelate: step 1/1. Its function is as follows. Catalyzes the stereoinversion of LL-2,6-diaminopimelate (L,L-DAP) to meso-diaminopimelate (meso-DAP), a precursor of L-lysine and an essential component of the bacterial peptidoglycan. The protein is Diaminopimelate epimerase of Pectobacterium atrosepticum (strain SCRI 1043 / ATCC BAA-672) (Erwinia carotovora subsp. atroseptica).